The primary structure comprises 190 residues: Dynein axonemal light chain 1 (190 aa).

4 LRR repeats span residues 49-70, 71-92, 94-115, and 116-137; these read VCEK…NGLK, NLKI…EAVG, SLEE…HVLK, and KLKV…NKLQ. One can recognise an LRRCT domain in the interval 150 to 190; it reads NPLEEKHSAEGDWQDRVTKSLKALKKLDGTPIIKNDEEEED.

It belongs to the dynein light chain LC1-type family. Interacts with DNAH5, a outer arm dynein heavy chain. Interacts with tubulin located within the A-tubule of the outer doublets in a ATP-independent manner.

Its subcellular location is the cytoplasm. The protein localises to the cytoskeleton. It localises to the cilium axoneme. Its function is as follows. Part of the multisubunit axonemal ATPase complexes that generate the force for cilia motility and govern beat frequency. Component of the outer arm dynein (ODA). May be involved in a mechanosensory feedback mechanism controlling ODA activity based on external conformational cues by tethering the outer arm dynein heavy chain (DNAH5) to the microtubule within the axoneme. The protein is Dynein axonemal light chain 1 (DNAL1) of Ciona intestinalis (Transparent sea squirt).